The chain runs to 67 residues: Small, acid-soluble spore protein B (67 aa).

It belongs to the alpha/beta-type SASP family.

SASP are bound to spore DNA. They are double-stranded DNA-binding proteins that cause DNA to change to an a-like conformation. They protect the DNA backbone from chemical and enzymatic cleavage and are thus involved in dormant spore's high resistance to UV light. The chain is Small, acid-soluble spore protein B (sspB) from Bacillus subtilis (strain 168).